A 100-amino-acid chain; its full sequence is Small ribosomal subunit protein bS20 (100 aa).

The span at 1–18 shows a compositional bias: basic and acidic residues; sequence MPNKKSAEKRVRQSEQRR. Residues 1 to 26 are disordered; the sequence is MPNKKSAEKRVRQSEQRRQKNRGYQK.

This sequence belongs to the bacterial ribosomal protein bS20 family.

In terms of biological role, binds directly to 16S ribosomal RNA. This Petrotoga mobilis (strain DSM 10674 / SJ95) protein is Small ribosomal subunit protein bS20.